The following is a 372-amino-acid chain: MSFNALPQSSMPLLMGNSLNAWSDALTGFAPMGLPLGLLVIAAIPLVFIALYALTYGVYGERKISAFMQDRLGPMEVGKWGILQTLADILKLLQKEDIVPTSADKFLFVIGPGVLFVGSFLAFAVLPFGPAFIGANLNVGLFYAIGIVALEVVGILAAGWGSNNKWALYGAVRSVAQIVSYEIPAAIALLCGAMMAGTLDMQEINVLQSGPWGFAHFFLFQSPIAWLPFLIYFIASLAETNRAPFDIPEAESELVAGYFTEYSGMKFAVIFLAEYGSMFMVSAIIAIVFLGGWNSPLPNIGSLALNDLTTGPVWGAFWIIMKGFFFIFVQMWLRWTLPRLRVDQLMYLCWKVLTPFAFVSFVLTAIWMIYVP.

8 helical membrane-spanning segments follow: residues 34-54, 106-126, 139-159, 178-198, 217-237, 269-289, 313-333, and 352-372; these read LPLG…LYAL, FLFV…FAVL, VGLF…LAAG, IVSY…MAGT, FFLF…IASL, VIFL…AIVF, VWGA…QMWL, and VLTP…IYVP.

Belongs to the complex I subunit 1 family. In terms of assembly, NDH-1 is composed of 14 different subunits. Subunits NuoA, H, J, K, L, M, N constitute the membrane sector of the complex.

The protein resides in the cell inner membrane. It carries out the reaction a quinone + NADH + 5 H(+)(in) = a quinol + NAD(+) + 4 H(+)(out). Functionally, NDH-1 shuttles electrons from NADH, via FMN and iron-sulfur (Fe-S) centers, to quinones in the respiratory chain. The immediate electron acceptor for the enzyme in this species is believed to be ubiquinone. Couples the redox reaction to proton translocation (for every two electrons transferred, four hydrogen ions are translocated across the cytoplasmic membrane), and thus conserves the redox energy in a proton gradient. This subunit may bind ubiquinone. In Chlorobium luteolum (strain DSM 273 / BCRC 81028 / 2530) (Pelodictyon luteolum), this protein is NADH-quinone oxidoreductase subunit H.